A 193-amino-acid polypeptide reads, in one-letter code: Ion-translocating oxidoreductase complex subunit A (193 aa).

6 helical membrane passes run 4 to 24 (LLLILIGAVLVNNFVLARFLG), 39 to 59 (LGMGMAVTFVMVVASGCTWVL), 72 to 92 (LQTIAFILVIATLVQMVEMIV), 102 to 122 (SLGIFLPLITTNCAVLGLAVL), 134 to 154 (LVFAFGGAVGFTLALVLFAGL), and 171 to 191 (PIELITAGLLALAFMGFAGLV).

It belongs to the NqrDE/RnfAE family. In terms of assembly, the complex is composed of six subunits: RnfA, RnfB, RnfC, RnfD, RnfE and RnfG.

It is found in the cell inner membrane. In terms of biological role, part of a membrane-bound complex that couples electron transfer with translocation of ions across the membrane. The sequence is that of Ion-translocating oxidoreductase complex subunit A from Syntrophotalea carbinolica (strain DSM 2380 / NBRC 103641 / GraBd1) (Pelobacter carbinolicus).